Here is a 303-residue protein sequence, read N- to C-terminus: UDP-3-O-acyl-N-acetylglucosamine deacetylase (303 aa).

Zn(2+) is bound by residues His-77, His-236, and Asp-240. Residue His-263 is the Proton donor of the active site.

The protein belongs to the LpxC family. Requires Zn(2+) as cofactor.

The catalysed reaction is a UDP-3-O-[(3R)-3-hydroxyacyl]-N-acetyl-alpha-D-glucosamine + H2O = a UDP-3-O-[(3R)-3-hydroxyacyl]-alpha-D-glucosamine + acetate. The protein operates within glycolipid biosynthesis; lipid IV(A) biosynthesis; lipid IV(A) from (3R)-3-hydroxytetradecanoyl-[acyl-carrier-protein] and UDP-N-acetyl-alpha-D-glucosamine: step 2/6. Its function is as follows. Catalyzes the hydrolysis of UDP-3-O-myristoyl-N-acetylglucosamine to form UDP-3-O-myristoylglucosamine and acetate, the committed step in lipid A biosynthesis. This Ruthia magnifica subsp. Calyptogena magnifica protein is UDP-3-O-acyl-N-acetylglucosamine deacetylase.